A 130-amino-acid polypeptide reads, in one-letter code: uncharacterized protein (130 aa).

Transmembrane regions (helical) follow at residues 35 to 57 (FLIT…FISL) and 72 to 91 (IVFF…LLLL).

The protein resides in the cell membrane. This is an uncharacterized protein from Pasteurella multocida (strain Pm70).